The chain runs to 187 residues: MKIAQEIRVGNVIMIGKDPMVVLKTEFNKSGRNSAVVKMKMKNLLSGAGAETVFKADDKLDTVQLERKECTYSYFADPMYVFMDTEYNQYDIEKENLGDVLNYLIDGMEDICEVTFYDGKAISMELPITIVREVEYTEPSVRGDTSGKVMKPAKLKGTDATISVADFVKIGDKIEIDTRTGEFKRRV.

Belongs to the elongation factor P family.

The protein localises to the cytoplasm. Its pathway is protein biosynthesis; polypeptide chain elongation. Functionally, involved in peptide bond synthesis. Stimulates efficient translation and peptide-bond synthesis on native or reconstituted 70S ribosomes in vitro. Probably functions indirectly by altering the affinity of the ribosome for aminoacyl-tRNA, thus increasing their reactivity as acceptors for peptidyl transferase. The polypeptide is Elongation factor P (Tolumonas auensis (strain DSM 9187 / NBRC 110442 / TA 4)).